The primary structure comprises 79 residues: Small ribosomal subunit protein bS18 (79 aa).

The protein belongs to the bacterial ribosomal protein bS18 family. Part of the 30S ribosomal subunit. Forms a tight heterodimer with protein bS6.

Binds as a heterodimer with protein bS6 to the central domain of the 16S rRNA, where it helps stabilize the platform of the 30S subunit. The sequence is that of Small ribosomal subunit protein bS18 from Bacillus pumilus (strain SAFR-032).